Consider the following 1119-residue polypeptide: SH3 and PX domain-containing protein 2A (1119 aa).

The region spanning 4-128 is the PX domain; that stretch reads RTVLDVKVVD…RFFETKPDDI (125 aa). SH3 domains are found at residues 149 to 208 and 249 to 308; these read MVLE…SQSG and SREE…KLKD. Disordered stretches follow at residues 388-429, 494-595, 641-815, 914-941, and 957-1004; these read SSAT…PPRR, APSS…SNPA, SSDD…HESV, NLRSMSNPSPPIPSKPPGGFSKPTAMLN, and RPQS…SSFT. The SH3 3 domain occupies 445–504; that stretch reads TVEAEYYTIAEFQSSISDGISFRGGQKADVIEKNSGGWWYVQIGDTEGWAPSSYIDKRKK. Basic and acidic residues-rich tracts occupy residues 581 to 590 and 688 to 718; these read PKPEPRKFEI and GRAERHSSKLFSDESARNPKREPVMRKDVEI. The segment covering 779 to 802 has biased composition (low complexity); that stretch reads TASVVSSEDSTSSRSTSDLSSVYS. Basic and acidic residues predominate over residues 806-815; sequence RGGESDHESV. Residues 812-871 form the SH3 4 domain; it reads HESVLFRTTDAYERAQESELSFPAGVEVEVLEKQESGWWFVRWGSDEGWVPTFYLEPIKH. One can recognise an SH3 5 domain in the interval 1058–1119; the sequence is NLREVYVSIA…VPSNYLERKK (62 aa).

This sequence belongs to the SH3PXD2 family. Post-translationally, tyrosine phosphorylated.

Its subcellular location is the cytoplasm. It localises to the cell projection. It is found in the podosome. In terms of biological role, adapter protein involved in invadopodia and podosome formation and extracellular matrix degradation. The protein is SH3 and PX domain-containing protein 2A (sh3pxd2a) of Danio rerio (Zebrafish).